Here is a 64-residue protein sequence, read N- to C-terminus: Large ribosomal subunit protein uL29 (64 aa).

It belongs to the universal ribosomal protein uL29 family.

The sequence is that of Large ribosomal subunit protein uL29 from Porphyromonas gingivalis (strain ATCC 33277 / DSM 20709 / CIP 103683 / JCM 12257 / NCTC 11834 / 2561).